A 114-amino-acid chain; its full sequence is MKKRNISIKSKVEIQELFKKGRFIRIEGINIFYEFTSLSISRMIVTFPKVFKGAVKRNRVRRIFKECFRKQLALLKNRYVDFIFVVYPQRVDVNYCEVDTMLKNIIVHVMKRKV.

It belongs to the RnpA family. Consists of a catalytic RNA component (M1 or rnpB) and a protein subunit.

The catalysed reaction is Endonucleolytic cleavage of RNA, removing 5'-extranucleotides from tRNA precursor.. RNaseP catalyzes the removal of the 5'-leader sequence from pre-tRNA to produce the mature 5'-terminus. It can also cleave other RNA substrates such as 4.5S RNA. The protein component plays an auxiliary but essential role in vivo by binding to the 5'-leader sequence and broadening the substrate specificity of the ribozyme. The sequence is that of Ribonuclease P protein component from Borrelia turicatae (strain 91E135).